The chain runs to 440 residues: GTPase Der (440 aa).

2 consecutive EngA-type G domains span residues 3–168 (PIIA…GKMD) and 177–353 (LKLA…EEYT). Residues 9–16 (GRPNVGKS), 56–60 (DTGGL), 119–122 (NKID), 183–190 (GKPNAGKS), 230–234 (DTAGI), and 295–298 (NKWD) contribute to the GTP site. The 85-residue stretch at 354–438 (KRISTGLLNT…PIMISFENKS (85 aa)) folds into the KH-like domain.

It belongs to the TRAFAC class TrmE-Era-EngA-EngB-Septin-like GTPase superfamily. EngA (Der) GTPase family. Associates with the 50S ribosomal subunit.

Its function is as follows. GTPase that plays an essential role in the late steps of ribosome biogenesis. The sequence is that of GTPase Der from Fusobacterium nucleatum subsp. nucleatum (strain ATCC 25586 / DSM 15643 / BCRC 10681 / CIP 101130 / JCM 8532 / KCTC 2640 / LMG 13131 / VPI 4355).